A 128-amino-acid chain; its full sequence is Large ribosomal subunit protein uL22 (128 aa).

It belongs to the universal ribosomal protein uL22 family. In terms of assembly, part of the 50S ribosomal subunit.

Its function is as follows. This protein binds specifically to 23S rRNA; its binding is stimulated by other ribosomal proteins, e.g. L4, L17, and L20. It is important during the early stages of 50S assembly. It makes multiple contacts with different domains of the 23S rRNA in the assembled 50S subunit and ribosome. In terms of biological role, the globular domain of the protein is located near the polypeptide exit tunnel on the outside of the subunit, while an extended beta-hairpin is found that lines the wall of the exit tunnel in the center of the 70S ribosome. The chain is Large ribosomal subunit protein uL22 from Prochlorococcus marinus (strain MIT 9301).